The chain runs to 215 residues: Adenylate kinase (215 aa).

10 to 15 (GAGKGT) serves as a coordination point for ATP. The segment at 30–59 (STGDMLRAAVKAGSPLGQQVKGVMDSGGLV) is NMP. Residues Thr31, Arg36, 57-59 (GLV), 85-88 (GFPR), and Gln92 each bind AMP. The tract at residues 122-159 (GRRVHPASGRVYHTEHNPPKVAGKDDVTGEELIQREDD) is LID. ATP-binding positions include Arg123 and 132-133 (VY). Arg156 and Arg167 together coordinate AMP. Residue Gly201 participates in ATP binding.

This sequence belongs to the adenylate kinase family. As to quaternary structure, monomer.

The protein localises to the cytoplasm. The catalysed reaction is AMP + ATP = 2 ADP. Its pathway is purine metabolism; AMP biosynthesis via salvage pathway; AMP from ADP: step 1/1. In terms of biological role, catalyzes the reversible transfer of the terminal phosphate group between ATP and AMP. Plays an important role in cellular energy homeostasis and in adenine nucleotide metabolism. This is Adenylate kinase from Pseudomonas aeruginosa (strain LESB58).